The following is a 24-amino-acid chain: Lectin (24 aa).

It belongs to the leguminous lectin family. As to quaternary structure, homotetramer.

Functionally, agglutinates erythrocytes of blood group A. Binds in decreasing order of affinity: N-acetyl-D-galactosamine, D-galactose, and D-galactosamine. This is Lectin from Crotalaria pallida (Smooth rattlebox).